We begin with the raw amino-acid sequence, 445 residues long: Phosphoglucosamine mutase (445 aa).

Residue Ser-102 is the Phosphoserine intermediate of the active site. Mg(2+) is bound by residues Ser-102, Asp-241, Asp-243, and Asp-245. The residue at position 102 (Ser-102) is a Phosphoserine.

This sequence belongs to the phosphohexose mutase family. The cofactor is Mg(2+). Post-translationally, activated by phosphorylation.

The enzyme catalyses alpha-D-glucosamine 1-phosphate = D-glucosamine 6-phosphate. Catalyzes the conversion of glucosamine-6-phosphate to glucosamine-1-phosphate. This is Phosphoglucosamine mutase from Aliivibrio salmonicida (strain LFI1238) (Vibrio salmonicida (strain LFI1238)).